We begin with the raw amino-acid sequence, 295 residues long: Ribosomal RNA small subunit methyltransferase A (295 aa).

S-adenosyl-L-methionine contacts are provided by Asn29, Leu31, Gly56, Glu77, Asp102, and Asn128.

The protein belongs to the class I-like SAM-binding methyltransferase superfamily. rRNA adenine N(6)-methyltransferase family. RsmA subfamily.

The protein resides in the cytoplasm. It catalyses the reaction adenosine(1518)/adenosine(1519) in 16S rRNA + 4 S-adenosyl-L-methionine = N(6)-dimethyladenosine(1518)/N(6)-dimethyladenosine(1519) in 16S rRNA + 4 S-adenosyl-L-homocysteine + 4 H(+). In terms of biological role, specifically dimethylates two adjacent adenosines (A1518 and A1519) in the loop of a conserved hairpin near the 3'-end of 16S rRNA in the 30S particle. May play a critical role in biogenesis of 30S subunits. This Listeria monocytogenes serotype 4b (strain CLIP80459) protein is Ribosomal RNA small subunit methyltransferase A.